Reading from the N-terminus, the 596-residue chain is Elongation factor 4 (596 aa).

The 183-residue stretch at 2 to 184 (KNIRNFSIIA…TIVKNIPSPA (183 aa)) folds into the tr-type G domain. GTP contacts are provided by residues 14-19 (DHGKST) and 131-134 (NKID).

It belongs to the TRAFAC class translation factor GTPase superfamily. Classic translation factor GTPase family. LepA subfamily.

Its subcellular location is the cell inner membrane. It catalyses the reaction GTP + H2O = GDP + phosphate + H(+). Its function is as follows. Required for accurate and efficient protein synthesis under certain stress conditions. May act as a fidelity factor of the translation reaction, by catalyzing a one-codon backward translocation of tRNAs on improperly translocated ribosomes. Back-translocation proceeds from a post-translocation (POST) complex to a pre-translocation (PRE) complex, thus giving elongation factor G a second chance to translocate the tRNAs correctly. Binds to ribosomes in a GTP-dependent manner. This chain is Elongation factor 4, found in Colwellia psychrerythraea (strain 34H / ATCC BAA-681) (Vibrio psychroerythus).